Here is a 574-residue protein sequence, read N- to C-terminus: Efflux pump FUB11 (574 aa).

The disordered stretch occupies residues 1-44; the sequence is MAIDPQPSSPSLSSETIANDTIGNDNNVNEPSVEPKTQEHQHTV. Polar residues predominate over residues 9-30; it reads SPSLSSETIANDTIGNDNNVNE. Asparagine 19 is a glycosylation site (N-linked (GlcNAc...) asparagine). The next 11 helical transmembrane spans lie at 116–136, 148–168, 176–196, 208–228, 235–255, 318–338, 348–368, 394–414, 419–439, 449–469, and 484–504; these read VATLGISLYVLGFTFGPLIWA, FFFTFMVATAFSAGAAGAGSI, FLTGSIGSAPLSNAPALIADM, MFSGAPFLGPAIGPIAGGFLG, WLHGLMAAFTGVTWIACTVFI, IYISIIYGTMYMCFAAFPIVF, IGGLAFTGIVIGVILSIISFA, AIMGSLLIPIGLFWFAWTTFA, IVPIIGTVFFAWGLVLVFMAL, IFAASIMAANSALRSLFGAAF, and WASSIPAFLALACVPFPFLFY. The tract at residues 552-574 is disordered; it reads HNSHTSATHSHGHRRSLSCTRSV.

This sequence belongs to the major facilitator superfamily. DHA1 family. Polyamines/proton antiporter (TC 2.A.1.2.16) subfamily.

Its subcellular location is the cell membrane. Functionally, efflux pump involved in export of fusaric acid, a mycotoxin with low to moderate toxicity to animals and humans, but with high phytotoxic properties. Constitutes a self-protecting mechanism of the fungus against critical levels of fusaric acid within the cell. This chain is Efflux pump FUB11, found in Gibberella fujikuroi (strain CBS 195.34 / IMI 58289 / NRRL A-6831) (Bakanae and foot rot disease fungus).